Consider the following 125-residue polypeptide: Prefoldin subunit beta (125 aa).

Belongs to the prefoldin subunit beta family. As to quaternary structure, heterohexamer of two alpha and four beta subunits.

The protein resides in the cytoplasm. Molecular chaperone capable of stabilizing a range of proteins. Seems to fulfill an ATP-independent, HSP70-like function in archaeal de novo protein folding. The chain is Prefoldin subunit beta (pfdB) from Sulfurisphaera tokodaii (strain DSM 16993 / JCM 10545 / NBRC 100140 / 7) (Sulfolobus tokodaii).